The following is a 125-amino-acid chain: Large ribosomal subunit protein bL17 (125 aa).

Belongs to the bacterial ribosomal protein bL17 family. In terms of assembly, part of the 50S ribosomal subunit. Contacts protein L32.

This Syntrophus aciditrophicus (strain SB) protein is Large ribosomal subunit protein bL17.